A 688-amino-acid polypeptide reads, in one-letter code: Glycine--tRNA ligase beta subunit (688 aa).

The protein belongs to the class-II aminoacyl-tRNA synthetase family. As to quaternary structure, tetramer of two alpha and two beta subunits.

Its subcellular location is the cytoplasm. It catalyses the reaction tRNA(Gly) + glycine + ATP = glycyl-tRNA(Gly) + AMP + diphosphate. The protein is Glycine--tRNA ligase beta subunit of Actinobacillus pleuropneumoniae serotype 7 (strain AP76).